The chain runs to 473 residues: MAGRQQELPTITPYLQETSPERAPSLPPKKKLRKNVQVPDRVPVLPPSPEVVPDSEEEEEEVVYTGFSHPGVQVVQKASGKRYVRRLEPKGVPPPSEENNEEEEPSTSKAVTSVVLNPQAEPLVSAWEKGMDLMIKLMEKYHVEAEEKNGFKFLPEQSNVYRKICQTWLNEEHRGLPLTFTSHKTFVEMMGRFLRAYVESYAGVKNNEWEPTGCAIWLHGCTEQEGVLRCYHGLEMIQKEQLVEMDVASENAQRALKEHPSRAKVVQNRWGRSVVQLKNDDARCCVEDVSCATNVFSAKSCGLFFSEGTKAQTAFLQIEAFMQAEYPKMQNGLKRLLMVMRCDCLYKPTGVPQLGRQMCKATPFALSNVDSLRAEEVTDKVALASIQYPCVLVYQCANPVYRNSRGGQGPNCDFKISAPDLLGALQLVRRLWGENVDGPLPKMLIPEFKWSSRLQYRNVALPASHGDGEKEPF.

Disordered regions lie at residues 1–69 (MAGR…GFSH) and 85–111 (RRLE…SKAV). Residues 7-18 (ELPTITPYLQET) are compositionally biased toward polar residues. The segment covering 53–62 (PDSEEEEEEV) has biased composition (acidic residues). The residue at position 141 (Y141) is a Phosphotyrosine; by host. Residues C230 and H232 each contribute to the Zn(2+) site. Residues 243 to 277 (VEMDVASENAQRALKEHPSRAKVVQNRWGRSVVQL) are flexible loop. 6 residues coordinate Zn(2+): C285, C301, C342, C344, C396, and C412. The tract at residues 459-473 (VALPASHGDGEKEPF) is C-terminal arm, DBP binding.

Belongs to the adenoviridae E2A DNA-binding protein family. In terms of assembly, homomultimerizes on viral ssDNA bound to pTP. Forms a initiation complex with viral polymerase, pTP and hosts NFIA and POU2F1/OCT1. Interacts with host SRCAP.

The protein localises to the host nucleus. In terms of biological role, plays a role in the elongation phase of viral strand displacement replication by unwinding the template in an ATP-independent fashion, employing its capacity to form multimers. Also enhances the rate of initiation. Released from template upon second strand synthesis. Assembles in complex with viral pTP, viral pol, host NFIA and host POU2F1/OCT1 on viral origin of replication. Covers the whole ssDNA genome during synthesis. The complementary strand synthesis induces its relese from DNA template. May inhibit cellular transcription mediated by the interaction between host SRCAP and CBP. The sequence is that of DNA-binding protein from Homo sapiens (Human).